The sequence spans 89 residues: Small ribosomal subunit protein uS15 (89 aa).

The protein belongs to the universal ribosomal protein uS15 family. In terms of assembly, part of the 30S ribosomal subunit. Forms a bridge to the 50S subunit in the 70S ribosome, contacting the 23S rRNA.

In terms of biological role, one of the primary rRNA binding proteins, it binds directly to 16S rRNA where it helps nucleate assembly of the platform of the 30S subunit by binding and bridging several RNA helices of the 16S rRNA. Forms an intersubunit bridge (bridge B4) with the 23S rRNA of the 50S subunit in the ribosome. This Bartonella tribocorum (strain CIP 105476 / IBS 506) protein is Small ribosomal subunit protein uS15.